A 658-amino-acid polypeptide reads, in one-letter code: UvrABC system protein B (658 aa).

In terms of domain architecture, Helicase ATP-binding spans 26-413; it reads EGINSGKKKQ…SPEVIEQIIR (388 aa). 39 to 46 is an ATP binding site; it reads GATGTGKT. Positions 92 to 115 match the Beta-hairpin motif; it reads YYDYYQPEAYVPQTDTFIEKDAQI. Residues 430-596 form the Helicase C-terminal domain; the sequence is QIDDLLGEIQ…TIQKGVRDVI (167 aa). The 36-residue stretch at 622–657 folds into the UVR domain; it reads EKTIAKMEAEMKEAAKALDFERAAELRDLLLELKAE.

It belongs to the UvrB family. In terms of assembly, forms a heterotetramer with UvrA during the search for lesions. Interacts with UvrC in an incision complex.

The protein localises to the cytoplasm. In terms of biological role, the UvrABC repair system catalyzes the recognition and processing of DNA lesions. A damage recognition complex composed of 2 UvrA and 2 UvrB subunits scans DNA for abnormalities. Upon binding of the UvrA(2)B(2) complex to a putative damaged site, the DNA wraps around one UvrB monomer. DNA wrap is dependent on ATP binding by UvrB and probably causes local melting of the DNA helix, facilitating insertion of UvrB beta-hairpin between the DNA strands. Then UvrB probes one DNA strand for the presence of a lesion. If a lesion is found the UvrA subunits dissociate and the UvrB-DNA preincision complex is formed. This complex is subsequently bound by UvrC and the second UvrB is released. If no lesion is found, the DNA wraps around the other UvrB subunit that will check the other stand for damage. In Bacillus cereus (strain ZK / E33L), this protein is UvrABC system protein B.